The following is a 282-amino-acid chain: Bifunctional protein FolD (282 aa).

NADP(+)-binding positions include 165 to 167 (GRS), Ser-190, and Thr-231.

This sequence belongs to the tetrahydrofolate dehydrogenase/cyclohydrolase family. In terms of assembly, homodimer.

It catalyses the reaction (6R)-5,10-methylene-5,6,7,8-tetrahydrofolate + NADP(+) = (6R)-5,10-methenyltetrahydrofolate + NADPH. The catalysed reaction is (6R)-5,10-methenyltetrahydrofolate + H2O = (6R)-10-formyltetrahydrofolate + H(+). It participates in one-carbon metabolism; tetrahydrofolate interconversion. Catalyzes the oxidation of 5,10-methylenetetrahydrofolate to 5,10-methenyltetrahydrofolate and then the hydrolysis of 5,10-methenyltetrahydrofolate to 10-formyltetrahydrofolate. The sequence is that of Bifunctional protein FolD from Clostridium beijerinckii (strain ATCC 51743 / NCIMB 8052) (Clostridium acetobutylicum).